A 107-amino-acid chain; its full sequence is UPF0145 protein Ent638_1382 (107 aa).

It belongs to the UPF0145 family.

The polypeptide is UPF0145 protein Ent638_1382 (Enterobacter sp. (strain 638)).